The sequence spans 655 residues: Interferon-induced GTP-binding protein Mx2 (655 aa).

Residues 1–18 (MVLSTEENTGVDSVNLPS) show a composition bias toward polar residues. The interval 1-28 (MVLSTEENTGVDSVNLPSGETGLGEKDQ) is disordered. Residues 60–333 (DLALPAIAVI…LISHICKSLP (274 aa)) form the Dynamin-type G domain. The tract at residues 70–77 (GDQSSGKS) is G1 motif. 70 to 77 (GDQSSGKS) serves as a coordination point for GTP. Residues 95–97 (VTR) are G2 motif. The interval 171-174 (DLPG) is G3 motif. GTP contacts are provided by residues 171-175 (DLPGI) and 240-243 (TKPD). Residues 240–243 (TKPD) form a G4 motif region. Residues 272–275 (KCRG) are G5 motif. The segment at 542 to 562 (EAEEEKKTKHGTSSSSQSQDL) is disordered. The segment covering 552–562 (GTSSSSQSQDL) has biased composition (low complexity). The 89-residue stretch at 567-655 (MAEIFQHLNA…ARRRLAKFPG (89 aa)) folds into the GED domain.

This sequence belongs to the TRAFAC class dynamin-like GTPase superfamily. Dynamin/Fzo/YdjA family.

The protein resides in the cytoplasm. In terms of biological role, interferon-induced dynamin-like GTPase with antiviral activity against vesicular stomatitis virus (VSV) and Hantaan virus (HNTV). This chain is Interferon-induced GTP-binding protein Mx2 (Mx2), found in Mus musculus (Mouse).